Here is a 285-residue protein sequence, read N- to C-terminus: Tropomyosin (285 aa).

Residues 1–273 (MDAIKKKMQA…KEKYREIGDD (273 aa)) are a coiled coil.

It belongs to the tropomyosin family. Homodimer.

Tropomyosin, in association with the troponin complex, plays a central role in the calcium dependent regulation of muscle contraction. The sequence is that of Tropomyosin from Chironomus kiiensis (Midge).